A 349-amino-acid polypeptide reads, in one-letter code: Glycerol-1-phosphate dehydrogenase [NAD(P)+] (349 aa).

NAD(+) contacts are provided by residues glycine 95–aspartate 99 and threonine 117–serine 120. Residue aspartate 122 participates in substrate binding. Residue serine 126 participates in NAD(+) binding. Residue aspartate 169 coordinates substrate. Zn(2+)-binding residues include aspartate 169 and histidine 249. Histidine 253 contributes to the substrate binding site. Residue histidine 265 coordinates Zn(2+).

Belongs to the glycerol-1-phosphate dehydrogenase family. In terms of assembly, homodimer. Zn(2+) serves as cofactor.

Its subcellular location is the cytoplasm. The enzyme catalyses sn-glycerol 1-phosphate + NAD(+) = dihydroxyacetone phosphate + NADH + H(+). It catalyses the reaction sn-glycerol 1-phosphate + NADP(+) = dihydroxyacetone phosphate + NADPH + H(+). It participates in membrane lipid metabolism; glycerophospholipid metabolism. In terms of biological role, catalyzes the NAD(P)H-dependent reduction of dihydroxyacetonephosphate (DHAP or glycerone phosphate) to glycerol 1-phosphate (G1P). The G1P thus generated is used as the glycerophosphate backbone of phospholipids in the cellular membranes of Archaea. This Hyperthermus butylicus (strain DSM 5456 / JCM 9403 / PLM1-5) protein is Glycerol-1-phosphate dehydrogenase [NAD(P)+].